The chain runs to 98 residues: MTTVGVSLFRRSPEKITMKIATFLGLSFLLIASYFLICEAQHPGFQELLILEENMRDPENSKERSCAKPRENCNRMNILCCRGECVCPTFGDCFCYGD.

A signal peptide spans 1–40 (MTTVGVSLFRRSPEKITMKIATFLGLSFLLIASYFLICEA). Residues 41-64 (QHPGFQELLILEENMRDPENSKER) constitute a propeptide that is removed on maturation. 3 cysteine pairs are disulfide-bonded: C66–C81, C73–C85, and C80–C95.

Belongs to the hainantoxin family. 17 subfamily. In terms of tissue distribution, expressed by the venom gland.

It is found in the secreted. In terms of biological role, inhibits with low potency Kv1.2/KCNA2 and Kv1.3/KCNA3 voltage-gated potassium channels. The sequence is that of Hainantoxin-XVII.3 from Cyriopagopus hainanus (Chinese bird spider).